The following is a 262-amino-acid chain: Tryptophan synthase alpha chain (262 aa).

Residues glutamate 48 and aspartate 59 each act as proton acceptor in the active site.

Belongs to the TrpA family. As to quaternary structure, tetramer of two alpha and two beta chains.

It catalyses the reaction (1S,2R)-1-C-(indol-3-yl)glycerol 3-phosphate + L-serine = D-glyceraldehyde 3-phosphate + L-tryptophan + H2O. Its pathway is amino-acid biosynthesis; L-tryptophan biosynthesis; L-tryptophan from chorismate: step 5/5. Functionally, the alpha subunit is responsible for the aldol cleavage of indoleglycerol phosphate to indole and glyceraldehyde 3-phosphate. The sequence is that of Tryptophan synthase alpha chain from Helicobacter pylori (strain HPAG1).